Consider the following 290-residue polypeptide: Undecaprenyl-diphosphatase 2 (290 aa).

6 helical membrane-spanning segments follow: residues 104–124 (WMVI…KDLI), 128–148 (LRNL…FILA), 174–194 (CLAL…GLFL), 205–225 (SFLL…PDAF), 237–257 (QLFV…AWLL), and 268–288 (FALW…FGVL).

Belongs to the UppP family.

The protein localises to the cell membrane. It catalyses the reaction di-trans,octa-cis-undecaprenyl diphosphate + H2O = di-trans,octa-cis-undecaprenyl phosphate + phosphate + H(+). Its function is as follows. Catalyzes the dephosphorylation of undecaprenyl diphosphate (UPP). Confers resistance to bacitracin. This chain is Undecaprenyl-diphosphatase 2, found in Corynebacterium jeikeium (strain K411).